The chain runs to 660 residues: Bifunctional polymyxin resistance protein ArnA (660 aa).

Positions 1-304 (MKTVVFAYHD…TLGLVQGSRL (304 aa)) are formyltransferase ArnAFT. Position 86–88 (86–88 (HLI)) interacts with (6R)-10-formyltetrahydrofolate. The active-site Proton donor; for formyltransferase activity is the His-104. (6R)-10-formyltetrahydrofolate contacts are provided by residues Arg-114 and 136 to 140 (VKRAD). Positions 314–660 (RRTRVLILGV…RTVDLTDKPS (347 aa)) are dehydrogenase ArnADH. NAD(+)-binding positions include Asp-347 and 368–369 (DI). Residues Ala-393, Tyr-398, and 432–433 (TS) contribute to the UDP-alpha-D-glucuronate site. Glu-434 (proton acceptor; for decarboxylase activity) is an active-site residue. Residues Arg-460, Asn-492, 526 to 535 (KLIDGGKQKR), and Tyr-613 each bind UDP-alpha-D-glucuronate. Arg-619 functions as the Proton donor; for decarboxylase activity in the catalytic mechanism.

The protein in the N-terminal section; belongs to the Fmt family. UDP-L-Ara4N formyltransferase subfamily. It in the C-terminal section; belongs to the NAD(P)-dependent epimerase/dehydratase family. UDP-glucuronic acid decarboxylase subfamily. Homohexamer, formed by a dimer of trimers.

It carries out the reaction UDP-alpha-D-glucuronate + NAD(+) = UDP-beta-L-threo-pentopyranos-4-ulose + CO2 + NADH. The catalysed reaction is UDP-4-amino-4-deoxy-beta-L-arabinose + (6R)-10-formyltetrahydrofolate = UDP-4-deoxy-4-formamido-beta-L-arabinose + (6S)-5,6,7,8-tetrahydrofolate + H(+). Its pathway is nucleotide-sugar biosynthesis; UDP-4-deoxy-4-formamido-beta-L-arabinose biosynthesis; UDP-4-deoxy-4-formamido-beta-L-arabinose from UDP-alpha-D-glucuronate: step 1/3. The protein operates within nucleotide-sugar biosynthesis; UDP-4-deoxy-4-formamido-beta-L-arabinose biosynthesis; UDP-4-deoxy-4-formamido-beta-L-arabinose from UDP-alpha-D-glucuronate: step 3/3. It participates in bacterial outer membrane biogenesis; lipopolysaccharide biosynthesis. In terms of biological role, bifunctional enzyme that catalyzes the oxidative decarboxylation of UDP-glucuronic acid (UDP-GlcUA) to UDP-4-keto-arabinose (UDP-Ara4O) and the addition of a formyl group to UDP-4-amino-4-deoxy-L-arabinose (UDP-L-Ara4N) to form UDP-L-4-formamido-arabinose (UDP-L-Ara4FN). The modified arabinose is attached to lipid A and is required for resistance to polymyxin and cationic antimicrobial peptides. The chain is Bifunctional polymyxin resistance protein ArnA from Escherichia coli (strain SMS-3-5 / SECEC).